Consider the following 399-residue polypeptide: Homocysteine-responsive endoplasmic reticulum-resident ubiquitin-like domain member 2 protein (399 aa).

The Ubiquitin-like domain occupies 10-89; that stretch reads VTLVIKAPNQ…HMVHLVCASR (80 aa). Disordered stretches follow at residues 88 to 144 and 211 to 250; these read SRTP…SIRH and ASNQ…APEM. The span at 95-106 shows a compositional bias: polar residues; it reads PKASTSNKSMGT. The span at 107–124 shows a compositional bias: low complexity; that stretch reads ASISRSSSEHSGSASPAS. Over residues 211-221 the composition is skewed to polar residues; that stretch reads ASNQSPSNGEN. Positions 234–246 are enriched in pro residues; it reads SPPPNPPRAPPNV. Residues 299-319 traverse the membrane as a helical segment; it reads FVMVMGAMILVYMHQAGWFPL.

It is found in the membrane. Functionally, could be involved in the unfolded protein response (UPR) pathway. The polypeptide is Homocysteine-responsive endoplasmic reticulum-resident ubiquitin-like domain member 2 protein (herpud2) (Xenopus tropicalis (Western clawed frog)).